The chain runs to 310 residues: Olfactory receptor 10N1 (310 aa).

Residues 1–23 (MDNYTLLNEFILLGIPQTQGLET) lie on the Extracellular side of the membrane. The N-linked (GlcNAc...) asparagine glycan is linked to N3. The helical transmembrane segment at 24 to 44 (LLFVVFLFIYFFTLLGNSLIF) threads the bilayer. Residues 45 to 55 (TAIISSSTLHT) are Cytoplasmic-facing. A helical membrane pass occupies residues 56 to 76 (PMYFFLGLLSVFDMLFPSVTC). Residues 77–95 (PKMLFYLSVRSPAISYKGC) lie on the Extracellular side of the membrane. C95 and C187 are oxidised to a cystine. A helical membrane pass occupies residues 96–116 (AAQLFFYHLLGSTEGCLYSVM). The Cytoplasmic segment spans residues 117-136 (AYDRYVAICHPLRYMLIMKP). Residues 137-157 (GVCVSLVIIAWLVGCLHATIL) traverse the membrane as a helical segment. At 158–202 (TSLTFQLVYCASNQVDYFFCDLPAVLPLACTDSKLARKVGSINVG) the chain is on the extracellular side. A helical membrane pass occupies residues 203–223 (FLALMLLFSVCVSYVHIGVAI). Residues 224–237 (LRIRSAEGRQKAFS) lie on the Cytoplasmic side of the membrane. The chain crosses the membrane as a helical span at residues 238-258 (TCSAHLTAILCAYGPVIIIYL). Residues 259–264 (QRTPNP) are Extracellular-facing. A helical membrane pass occupies residues 265–285 (LLGAVVQILNNIVSPMLNSLI). Residues 286–310 (YSLRNKEVKRSLRRVFQNITFHGQK) lie on the Cytoplasmic side of the membrane.

This sequence belongs to the G-protein coupled receptor 1 family.

The protein localises to the cell membrane. Its function is as follows. Odorant receptor. The polypeptide is Olfactory receptor 10N1 (Mus musculus (Mouse)).